We begin with the raw amino-acid sequence, 93 residues long: YcgL domain-containing protein VV1_0131 (93 aa).

The 84-residue stretch at 1-84 folds into the YcgL domain; sequence MLCSIYKSSK…PPENLLQQHK (84 aa). The interval 72-93 is disordered; that stretch reads LPPPPENLLQQHKERKAQQKND.

This is YcgL domain-containing protein VV1_0131 from Vibrio vulnificus (strain CMCP6).